The primary structure comprises 270 residues: Non-structural maintenance of chromosomes element 1 homolog (270 aa).

The RING-type; atypical zinc-finger motif lies at Cys-185–Asn-226. The disordered stretch occupies residues Leu-236–Arg-270. Composition is skewed to polar residues over residues Asn-237–Thr-251 and Ser-259–Arg-270.

This sequence belongs to the NSE1 family. Component of the SMC5-SMC6 complex.

It is found in the nucleus. The protein resides in the chromosome. The protein localises to the telomere. The catalysed reaction is S-ubiquitinyl-[E2 ubiquitin-conjugating enzyme]-L-cysteine + [acceptor protein]-L-lysine = [E2 ubiquitin-conjugating enzyme]-L-cysteine + N(6)-ubiquitinyl-[acceptor protein]-L-lysine.. Its function is as follows. RING-type zinc finger-containing E3 ubiquitin ligase that assembles with melanoma antigen protein (MAGE) to catalyze the direct transfer of ubiquitin from E2 ubiquitin-conjugating enzyme to a specific substrate. Within MAGE-RING ubiquitin ligase complex, MAGE stimulates and specifies ubiquitin ligase activity likely through recruitment and/or stabilization of the E2 ubiquitin-conjugating enzyme at the E3:substrate complex. Involved in maintenance of genome integrity, DNA damage response and DNA repair. This chain is Non-structural maintenance of chromosomes element 1 homolog (nsmce1), found in Xenopus laevis (African clawed frog).